The sequence spans 186 residues: Transcription factor pgmR (186 aa).

A DNA-binding region (zn(2)-C6 fungal-type) is located at residues 19–46; sequence CDECGAAKLKCDRGHPSCGRCISLGLKC. The disordered stretch occupies residues 52-98; it reads RKAGKPRRDAQSATRPPPTPGDSGPPLDYNSFGPTSPPSSVGDGATL.

It is found in the nucleus. Transcription factor that specifically regulates the expression of the pgm gene cluster that mediates the biosynthesis of cryptic naphthoquinones derived pigments responsible for the coloration of the fruiting bodies. This Aspergillus terreus (strain NIH 2624 / FGSC A1156) protein is Transcription factor pgmR.